The sequence spans 111 residues: Resistin-like alpha (111 aa).

The first 23 residues, 1 to 23 (MKTTTCSLLICISLLQLMVPVNT), serve as a signal peptide directing secretion. Cystine bridges form between cysteine 55/cysteine 108, cysteine 67/cysteine 107, cysteine 76/cysteine 93, cysteine 78/cysteine 95, and cysteine 82/cysteine 97.

The protein belongs to the resistin/FIZZ family. As to quaternary structure, monomer. Highest levels in adipose tissue.

The protein localises to the secreted. Its function is as follows. Probable hormone. Plays a role in pulmonary vascular remodeling. The protein is Resistin-like alpha (Retnla) of Mus musculus (Mouse).